Here is a 122-residue protein sequence, read N- to C-terminus: Large ribosomal subunit protein uL14 (122 aa).

Belongs to the universal ribosomal protein uL14 family. Part of the 50S ribosomal subunit. Forms a cluster with proteins L3 and L19. In the 70S ribosome, L14 and L19 interact and together make contacts with the 16S rRNA in bridges B5 and B8.

Its function is as follows. Binds to 23S rRNA. Forms part of two intersubunit bridges in the 70S ribosome. The sequence is that of Large ribosomal subunit protein uL14 from Saccharopolyspora erythraea (strain ATCC 11635 / DSM 40517 / JCM 4748 / NBRC 13426 / NCIMB 8594 / NRRL 2338).